A 266-amino-acid chain; its full sequence is PTS system mannose-specific EIIC component (266 aa).

Met-1 is modified (N-formylmethionine). Topologically, residues 1–4 (MEIT) are periplasmic. The 237-residue stretch at 1–237 (MEITTLQIVL…GVIGTVMAVL (237 aa)) folds into the PTS EIIC type-4 domain. Residues 5–43 (TLQIVLVFIVACIAGMGSILDEFQFHRPLIACTLVGIVL) lie within the membrane without spanning it. Residues 44–46 (GDM) lie on the Periplasmic side of the membrane. An intramembrane segment occupies 47–86 (KTGIIIGGTLEMIALGWMNIGAAVAPDAALASIISTILVI). At 87–90 (AGHQ) the chain is on the periplasmic side. A membrane pass occupies residues 91–124 (SIGAGIALAIPLAAAGQVLTIIVRTITVAFQHAA). Residues 125–132 (DKAADNGN) lie on the Cytoplasmic side of the membrane. At 133-160 (LTAISWIHVSSLFLQAMRVAIPAVIVAL) the chain is embedded in the membrane. Residues 161–176 (SVGTSEVQNMLNAIPE) lie on the Periplasmic side of the membrane. The segment at 177 to 200 (VVTNGLNIAGGMIVVVGYAMVINM) is a transmembrane helix. The Cytoplasmic segment spans residues 201–207 (MRAGYLM). A membrane pass occupies residues 208–218 (PFFYLGFVTAA). Residues 219–224 (FTNFNL) lie on the Periplasmic side of the membrane. A membrane pass occupies residues 225–242 (VALGVIGTVMAVLYIQLS). The Cytoplasmic portion of the chain corresponds to 243 to 266 (PKYNRVAGAPAQAAGNNDLDNELD).

In terms of assembly, homotrimer of protomers that are composed of two subunits, IIC and IID.

The protein localises to the cell inner membrane. In terms of biological role, the phosphoenolpyruvate-dependent sugar phosphotransferase system (sugar PTS), a major carbohydrate active transport system, catalyzes the phosphorylation of incoming sugar substrates concomitantly with their translocation across the cell membrane. The enzyme II ManXYZ PTS system is involved in mannose transport. In Escherichia coli O157:H7, this protein is PTS system mannose-specific EIIC component (manY).